Consider the following 344-residue polypeptide: MTDQAPVTYAGPPRVLSGVQPSGALHLGNYLGALVKFTRLQHEIDTFIFVADLHAITVWQDPAALAQQTREIAAAYIASGLDPDKATIFPQSAVREHAELSWIFNCVARLGWLDRMTQFKEKSGKHKERSSVGLYTYPVLQAADILIYKATHVPVGEDQKQHLELTRDIAQKFNHDFNAPGFFPLPDPLIQGPGARVMSLRDGSAKMSKSDPSDYSRINLTDTADDIAAKVKKARTDPEPLPETIEELATRAEADNLVGIFAALAGKTKAEVLADYAGKGFGTFKPALAELAVESLAPVGERMRGLLGDPAVLDAILAKGAEKAREAAAPTLAEVKKLVGFWGA.

ATP is bound by residues 20–22 and 28–29; these read QPS and GN. Positions 21-29 match the 'HIGH' region motif; the sequence is PSGALHLGN. D144 provides a ligand contact to L-tryptophan. ATP-binding positions include 156–158, V197, and 206–210; these read GED and KMSKS. A 'KMSKS' region motif is present at residues 206–210; the sequence is KMSKS.

It belongs to the class-I aminoacyl-tRNA synthetase family. In terms of assembly, homodimer.

The protein resides in the cytoplasm. It carries out the reaction tRNA(Trp) + L-tryptophan + ATP = L-tryptophyl-tRNA(Trp) + AMP + diphosphate + H(+). Functionally, catalyzes the attachment of tryptophan to tRNA(Trp). The protein is Tryptophan--tRNA ligase of Caulobacter vibrioides (strain ATCC 19089 / CIP 103742 / CB 15) (Caulobacter crescentus).